The primary structure comprises 308 residues: MSAQKPGLHPRNRHQHRYDLAALCQTTPELTSFLTRTPAGEQSVDFANPQAVKALNKALLAHFYAVTHWDIPQGFLCPPVPGRADYIHHLADLLGETTGSIPVQANILDVGVGANCIYPLIGAYEYGWRFTGSEISEAAMSSAQAIIQANTGLSRAIRLRRQKDSTAIFTGIIHKNEYYDATLCNPPFHDSAAAARAGSERKRRNLGQKRDDVLNFGGQQQELCCEGGEVTFIKKMIAESQTFRRQVLWFTTLVSRGENLPPLYRALTEVGAVKVVKKEMAQGQKQSRFIAWTFMDDDQRRRFITRKR.

Belongs to the methyltransferase superfamily. METTL16/RlmF family.

The protein localises to the cytoplasm. The catalysed reaction is adenosine(1618) in 23S rRNA + S-adenosyl-L-methionine = N(6)-methyladenosine(1618) in 23S rRNA + S-adenosyl-L-homocysteine + H(+). Specifically methylates the adenine in position 1618 of 23S rRNA. The chain is Ribosomal RNA large subunit methyltransferase F from Salmonella arizonae (strain ATCC BAA-731 / CDC346-86 / RSK2980).